Reading from the N-terminus, the 141-residue chain is Hemoglobin subunit alpha-A (141 aa).

Residues 1–141 (VLSGSDKTNV…VGNVLTAKYR (141 aa)) enclose the Globin domain. H58 lines the O2 pocket. H87 is a heme b binding site.

Belongs to the globin family. In terms of assembly, heterotetramer of two alpha chains and two beta chains. In terms of tissue distribution, red blood cells.

In terms of biological role, involved in oxygen transport from the lung to the various peripheral tissues. This is Hemoglobin subunit alpha-A (HBAA) from Chroicocephalus ridibundus (Black-headed gull).